The following is a 254-amino-acid chain: MELQIKIQNFQGPFDLLLHLIKKNQLDIYNINISEITGQYMEYIESLKEMDLEVTSEFIVIASTLLQIKSRELLPKIQDEEEEEISEENPEKILLDKLIEYKKFKNVASYLKGRLEKGFTVFSKKPEIIEKKEEEDKDIFIDVTILELYNLYNELITKYKDKINLSNTIPEEIELEEFKIGDKMNYLKSRIIENKNLSFSQISKECSCKGEVIVTFLALLELIRIKIVKVVQEGNFKEIYLERMEENEADELYY.

The protein belongs to the ScpA family. Component of a cohesin-like complex composed of ScpA, ScpB and the Smc homodimer, in which ScpA and ScpB bind to the head domain of Smc. The presence of the three proteins is required for the association of the complex with DNA.

The protein localises to the cytoplasm. Participates in chromosomal partition during cell division. May act via the formation of a condensin-like complex containing Smc and ScpB that pull DNA away from mid-cell into both cell halves. The polypeptide is Segregation and condensation protein A (Clostridium tetani (strain Massachusetts / E88)).